The primary structure comprises 156 residues: Small ribosomal subunit protein uS7 (156 aa).

This sequence belongs to the universal ribosomal protein uS7 family. As to quaternary structure, part of the 30S ribosomal subunit. Contacts proteins S9 and S11.

Functionally, one of the primary rRNA binding proteins, it binds directly to 16S rRNA where it nucleates assembly of the head domain of the 30S subunit. Is located at the subunit interface close to the decoding center, probably blocks exit of the E-site tRNA. This chain is Small ribosomal subunit protein uS7, found in Shewanella sediminis (strain HAW-EB3).